The sequence spans 375 residues: Alcohol dehydrogenase 1 (375 aa).

A1 bears the N-acetylalanine mark. The Zn(2+) site is built by C46, H68, C98, C101, C104, C112, and C175. Residues 200–205, D224, K229, 293–295, and R370 contribute to the NAD(+) site; these read GLGGVG and VGV.

The protein belongs to the zinc-containing alcohol dehydrogenase family. Class-I subfamily. Homodimer. Requires Zn(2+) as cofactor.

The protein localises to the cytoplasm. It catalyses the reaction a primary alcohol + NAD(+) = an aldehyde + NADH + H(+). It carries out the reaction a secondary alcohol + NAD(+) = a ketone + NADH + H(+). The sequence is that of Alcohol dehydrogenase 1 from Columba livia (Rock dove).